The sequence spans 304 residues: Glycine--tRNA ligase alpha subunit (304 aa).

It belongs to the class-II aminoacyl-tRNA synthetase family. As to quaternary structure, tetramer of two alpha and two beta subunits.

The protein localises to the cytoplasm. The catalysed reaction is tRNA(Gly) + glycine + ATP = glycyl-tRNA(Gly) + AMP + diphosphate. The chain is Glycine--tRNA ligase alpha subunit from Actinobacillus pleuropneumoniae serotype 3 (strain JL03).